Consider the following 165-residue polypeptide: Protein SprT (165 aa).

Positions glutamate 20–valine 163 constitute a SprT-like domain. Histidine 78 contacts Zn(2+). Residue glutamate 79 is part of the active site. Zn(2+) is bound at residue histidine 82.

It belongs to the SprT family. It depends on Zn(2+) as a cofactor.

The protein resides in the cytoplasm. In Shigella sonnei (strain Ss046), this protein is Protein SprT.